The following is a 510-amino-acid chain: NAD(P)H-quinone oxidoreductase subunit 2 A, chloroplastic (510 aa).

13 helical membrane passes run 24 to 44, 57 to 77, 99 to 119, 124 to 144, 149 to 169, 183 to 203, 229 to 249, 295 to 315, 323 to 343, 354 to 374, 395 to 415, 418 to 438, and 484 to 504; these read LLLF…GLIL, TPWL…ALLF, IFQF…VEYI, MAIT…MFLC, LITI…LSGY, YLLM…WLYG, ISIA…PAPF, WHLL…LIAI, MLAY…IVGD, YMLF…LFGL, ALSS…AGFF, LYLF…IGLL, and MIVC…IIAI.

Belongs to the complex I subunit 2 family. As to quaternary structure, NDH is composed of at least 16 different subunits, 5 of which are encoded in the nucleus.

It localises to the plastid. It is found in the chloroplast thylakoid membrane. The enzyme catalyses a plastoquinone + NADH + (n+1) H(+)(in) = a plastoquinol + NAD(+) + n H(+)(out). It carries out the reaction a plastoquinone + NADPH + (n+1) H(+)(in) = a plastoquinol + NADP(+) + n H(+)(out). Its function is as follows. NDH shuttles electrons from NAD(P)H:plastoquinone, via FMN and iron-sulfur (Fe-S) centers, to quinones in the photosynthetic chain and possibly in a chloroplast respiratory chain. The immediate electron acceptor for the enzyme in this species is believed to be plastoquinone. Couples the redox reaction to proton translocation, and thus conserves the redox energy in a proton gradient. The protein is NAD(P)H-quinone oxidoreductase subunit 2 A, chloroplastic of Nuphar advena (Common spatterdock).